A 185-amino-acid polypeptide reads, in one-letter code: Ribosome-recycling factor (185 aa).

This sequence belongs to the RRF family.

Its subcellular location is the cytoplasm. In terms of biological role, responsible for the release of ribosomes from messenger RNA at the termination of protein biosynthesis. May increase the efficiency of translation by recycling ribosomes from one round of translation to another. This is Ribosome-recycling factor from Pseudomonas fluorescens (strain SBW25).